The primary structure comprises 472 residues: GTPase HflX (472 aa).

A disordered region spans residues 1–21 (MDTIDTPGEQGSQSFGNSLGA). One can recognise a Hflx-type G domain in the interval 230-396 (PTFALIGYTN…LMTEIIQEKS (167 aa)). GTP-binding positions include 236-243 (GYTNSGKS), 261-265 (FATLD), 283-286 (DTVG), 349-352 (NKVD), and 374-376 (SAK). 2 residues coordinate Mg(2+): S243 and T263.

Belongs to the TRAFAC class OBG-HflX-like GTPase superfamily. HflX GTPase family. As to quaternary structure, monomer. Associates with the 50S ribosomal subunit. Requires Mg(2+) as cofactor.

Its subcellular location is the cytoplasm. Functionally, GTPase that associates with the 50S ribosomal subunit and may have a role during protein synthesis or ribosome biogenesis. Specific for GTP. This is GTPase HflX from Chlamydia pneumoniae (Chlamydophila pneumoniae).